The chain runs to 418 residues: Gamma-glutamyl phosphate reductase (418 aa).

Basic and acidic residues predominate over residues M1–S18. A disordered region spans residues M1–S22.

This sequence belongs to the gamma-glutamyl phosphate reductase family.

Its subcellular location is the cytoplasm. It catalyses the reaction L-glutamate 5-semialdehyde + phosphate + NADP(+) = L-glutamyl 5-phosphate + NADPH + H(+). It functions in the pathway amino-acid biosynthesis; L-proline biosynthesis; L-glutamate 5-semialdehyde from L-glutamate: step 2/2. Its function is as follows. Catalyzes the NADPH-dependent reduction of L-glutamate 5-phosphate into L-glutamate 5-semialdehyde and phosphate. The product spontaneously undergoes cyclization to form 1-pyrroline-5-carboxylate. This is Gamma-glutamyl phosphate reductase from Syntrophus aciditrophicus (strain SB).